The chain runs to 102 residues: Citrate lyase acyl carrier protein (102 aa).

S14 carries the O-(phosphoribosyl dephospho-coenzyme A)serine modification.

Belongs to the CitD family. As to quaternary structure, oligomer with a subunit composition of (alpha,beta,gamma)6.

The protein resides in the cytoplasm. Functionally, covalent carrier of the coenzyme of citrate lyase. The protein is Citrate lyase acyl carrier protein of Streptococcus pyogenes serotype M18 (strain MGAS8232).